An 815-amino-acid chain; its full sequence is Sodium/hydrogen exchanger 1 (815 aa).

Over 1–98 (MVLRSGICGL…FPVLGIDYTH (98 aa)) the chain is Extracellular. An O-linked (GalNAc...) threonine glycan is attached at Thr-42. The tract at residues 42–79 (TASTIRSSEPPRERSIGDVTTAPPEVTPESRPVNHSVT) is disordered. Residue Ser-56 is glycosylated (O-linked (GalNAc...) serine). O-linked (GalNAc...) threonine glycosylation is found at Thr-61, Thr-62, and Thr-68. An N-linked (GlcNAc...) asparagine glycan is attached at Asn-75. Residues 99 to 121 (VRTPFEISLWILLACLMKIGFHV) form a helical membrane-spanning segment. Over 122–130 (IPTISSIVP) the chain is Cytoplasmic. Residues 131–148 (ESCLLIVVGLLVGGLIKG) form a helical membrane-spanning segment. Topologically, residues 149-158 (VGETPPFLQS) are extracellular. A helical transmembrane segment spans residues 159-176 (DVFFLFLLPPIILDAGYF). The Cytoplasmic portion of the chain corresponds to 177-186 (LPLRQFTENL). The helical transmembrane segment at 187–215 (GTILIFAVVGTLWNAFFLGGLMYAVCLVG) threads the bilayer. The Extracellular portion of the chain corresponds to 216-222 (GEQINNI). The chain crosses the membrane as a helical span at residues 223–249 (GLLDNLLFGSIISAVDPVAVLAVFEEI). Residues 250-252 (HIN) are Cytoplasmic-facing. Residues 253-283 (ELLHILVFGESLLNDAVTVVLYHLFEEFANY) form a helical membrane-spanning segment. Over 284–287 (EHVG) the chain is Extracellular. The helical transmembrane segment at 288–322 (IVDIFLGFLSFFVVALGGVLVGVVYGVIAAFTSRF) threads the bilayer. Residues 323-328 (TSHIRV) are Cytoplasmic-facing. The helical transmembrane segment at 329–341 (IEPLFVFLYSYMA) threads the bilayer. The Extracellular portion of the chain corresponds to 342-350 (YLSAELFHL). The chain crosses the membrane as a helical span at residues 351–371 (SGIMALIASGVVMRPYVEANI). Topologically, residues 372-373 (SH) are cytoplasmic. Residues 374-404 (KSHTTIKYFLKMWSSVSETLIFIFLGVSTVA) traverse the membrane as a helical segment. Topologically, residues 405-410 (GSHHWN) are extracellular. The helical transmembrane segment at 411 to 438 (WTFVISTLLFCLIARVLGVLGLTWFINK) threads the bilayer. Over 439–444 (FRIVKL) the chain is Cytoplasmic. Residues 445 to 469 (TPKDQFIIAYGGLRGAIAFSLGYLL) traverse the membrane as a helical segment. At 470 to 475 (DKKHFP) the chain is on the extracellular side. The helical transmembrane segment at 476–505 (MCDLFLTAIITVIFFTVFVQGMTIRPLVDL) threads the bilayer. The interaction with TESC stretch occupies residues 503-545 (VDLLAVKKKQETKRSINEEIHTQFLDHLLTGIEDICGHYGHHH). Topologically, residues 506 to 815 (LAVKKKQETK…EGEPFFPKGQ (310 aa)) are cytoplasmic. Residues 509 to 516 (KKKQETKR) form a PI(4,5)P2-binding region region. Positions 515-545 (KRSINEEIHTQFLDHLLTGIEDICGHYGHHH) are interaction with CHP2. Positions 540-545 (HYGHHH) are confers pH-dependent PI(4,5)P2 binding. The segment at 552–560 (RFNKKYVKK) is PI(4,5)P2-binding region. Phosphoserine occurs at positions 599 and 602. Thr-603 is modified (phosphothreonine). Phosphoserine is present on residues Ser-605 and Ser-648. The interaction with TESC stretch occupies residues 633 to 815 (KILRNNLQKT…EGEPFFPKGQ (183 aa)). An interaction with CALM1 region spans residues 633 to 815 (KILRNNLQKT…EGEPFFPKGQ (183 aa)). Residues 684–687 (LTVP) form an interaction with PPP3CA region. Residues Ser-693, Ser-697, and Ser-703 each carry the phosphoserine modification. The interaction with PPP3CA stretch occupies residues 715 to 720 (PVITID). Ser-723, Ser-726, and Ser-729 each carry phosphoserine. The disordered stretch occupies residues 744 to 815 (LSRDPAKVAE…EGEPFFPKGQ (72 aa)). Phosphothreonine is present on Thr-779. Positions 782–791 (PSDSPSSQRI) are enriched in polar residues. Phosphoserine occurs at positions 785, 787, and 796.

It belongs to the monovalent cation:proton antiporter 1 (CPA1) transporter (TC 2.A.36) family. As to quaternary structure, homodimer; dimerization is crucial for its function. Oligomer. Interacts with CALM1 in a calcium-dependent manner. Interacts with TESC. Interacts (via the C-terminal domain) with CHP1; the interaction occurs at the plasma membrane in a calcium-dependent manner and facilitates the maturation, cell surface expression, and function of SLC9A3. Interacts with CHP2; the interaction occurs in a calcium-dependent manner. Interacts with EZR; regulates the cytoskeletal interactions of SLC9A1 and promotes stress fiber formation. In terms of processing, O-glycosylated. Ubiquitinated, leading to its degradation by the proteasome. Ubiquitination is reduced by CHP1. Post-translationally, phosphorylation at Thr-779 increases SLC9A1 activity. Specifically dephosphorylated at Thr-779 by PPP3CA that negatively regulates SLC9A1 activity. Phosphorylation at Ser-648 by AKT1 reduces SLC9A1 binding to CALM1. In terms of processing, palmitoylated; may play a major role in SLC9A1 regulation. Kidney and intestine.

The protein localises to the cell membrane. The protein resides in the basolateral cell membrane. The enzyme catalyses Na(+)(in) + H(+)(out) = Na(+)(out) + H(+)(in). It catalyses the reaction Li(+)(out) + H(+)(in) = Li(+)(in) + H(+)(out). It carries out the reaction Li(+)(in) + Na(+)(out) = Li(+)(out) + Na(+)(in). Activated at acidic pHs. Inhibited by amiloride and 5-amino-substituted derivatives. Inhibited by cariporide and eniporide. Phosphatidylinositol 4,5-bisphosphate (PI(4,5)P2) and phosphatidylinositol 3,4,5-trisphosphate (PI(3,4,5)P3) bind and differentially regulate SLC9A1 activity. Electroneutral Na(+) /H(+) antiporter that extrudes Na(+) in exchange for external protons driven by the inward sodium ion chemical gradient, protecting cells from acidification that occurs from metabolism. Exchanges intracellular H(+) ions for extracellular Na(+) in 1:1 stoichiometry. Plays a key role in maintening intracellular pH neutral and cell volume, and thus is important for cell growth, proliferation, migration and survival. In addition, can transport lithium Li(+) and also functions as a Na(+)/Li(+) antiporter. SLC9A1 also functions in membrane anchoring and organization of scaffolding complexes that coordinate signaling inputs. The sequence is that of Sodium/hydrogen exchanger 1 from Homo sapiens (Human).